We begin with the raw amino-acid sequence, 326 residues long: Tagatose 1,6-diphosphate aldolase (326 aa).

This sequence belongs to the aldolase LacD family.

The catalysed reaction is D-tagatofuranose 1,6-bisphosphate = D-glyceraldehyde 3-phosphate + dihydroxyacetone phosphate. It functions in the pathway carbohydrate metabolism; D-tagatose 6-phosphate degradation; D-glyceraldehyde 3-phosphate and glycerone phosphate from D-tagatose 6-phosphate: step 2/2. In Staphylococcus aureus (strain bovine RF122 / ET3-1), this protein is Tagatose 1,6-diphosphate aldolase.